Here is a 375-residue protein sequence, read N- to C-terminus: Chaperone protein DnaJ (375 aa).

The region spanning 5 to 70 (DFYETLGVAK…QKRAAYDRYG (66 aa)) is the J domain. Residues 136–214 (GKTAQIRVPT…CHGQGRVTEE (79 aa)) form a CR-type zinc finger. Zn(2+) contacts are provided by cysteine 149, cysteine 152, cysteine 166, cysteine 169, cysteine 188, cysteine 191, cysteine 202, and cysteine 205. 4 CXXCXGXG motif repeats span residues 149 to 156 (CDVCSGSG), 166 to 173 (CGTCQGTG), 188 to 195 (CPTCHGRG), and 202 to 209 (CPKCHGQG).

The protein belongs to the DnaJ family. Homodimer. Zn(2+) is required as a cofactor.

Its subcellular location is the cytoplasm. Functionally, participates actively in the response to hyperosmotic and heat shock by preventing the aggregation of stress-denatured proteins and by disaggregating proteins, also in an autonomous, DnaK-independent fashion. Unfolded proteins bind initially to DnaJ; upon interaction with the DnaJ-bound protein, DnaK hydrolyzes its bound ATP, resulting in the formation of a stable complex. GrpE releases ADP from DnaK; ATP binding to DnaK triggers the release of the substrate protein, thus completing the reaction cycle. Several rounds of ATP-dependent interactions between DnaJ, DnaK and GrpE are required for fully efficient folding. Also involved, together with DnaK and GrpE, in the DNA replication of plasmids through activation of initiation proteins. The chain is Chaperone protein DnaJ from Rhizobium etli (strain ATCC 51251 / DSM 11541 / JCM 21823 / NBRC 15573 / CFN 42).